Consider the following 211-residue polypeptide: Large ribosomal subunit protein bL17c (211 aa).

The N-terminal 95 residues, 1 to 95, are a transit peptide targeting the chloroplast; the sequence is MAIPMSMAMA…IVDGGGRIYA (95 aa).

The protein belongs to the bacterial ribosomal protein bL17 family. In terms of assembly, part of the 50S ribosomal subunit.

Its subcellular location is the plastid. It localises to the chloroplast. Its function is as follows. This protein binds directly to 23S ribosomal RNA. The chain is Large ribosomal subunit protein bL17c (RPL17) from Arabidopsis thaliana (Mouse-ear cress).